Reading from the N-terminus, the 652-residue chain is DNA ligase (652 aa).

NAD(+) contacts are provided by residues 29–33, 78–79, and Glu-107; these read DSEYD and SL. The active-site N6-AMP-lysine intermediate is the Lys-109. NAD(+)-binding residues include Arg-130, Glu-164, Lys-278, and Lys-302. Zn(2+) contacts are provided by Cys-395, Cys-398, Cys-413, and Cys-418. The 76-residue stretch at 577-652 folds into the BRCT domain; it reads VADAALSGLT…VRDEAWLESL (76 aa).

It belongs to the NAD-dependent DNA ligase family. LigA subfamily. Requires Mg(2+) as cofactor. It depends on Mn(2+) as a cofactor.

The catalysed reaction is NAD(+) + (deoxyribonucleotide)n-3'-hydroxyl + 5'-phospho-(deoxyribonucleotide)m = (deoxyribonucleotide)n+m + AMP + beta-nicotinamide D-nucleotide.. Its function is as follows. DNA ligase that catalyzes the formation of phosphodiester linkages between 5'-phosphoryl and 3'-hydroxyl groups in double-stranded DNA using NAD as a coenzyme and as the energy source for the reaction. It is essential for DNA replication and repair of damaged DNA. The chain is DNA ligase from Streptococcus pneumoniae (strain Hungary19A-6).